Consider the following 146-residue polypeptide: Putative pre-16S rRNA nuclease (146 aa).

It belongs to the YqgF nuclease family.

The protein resides in the cytoplasm. Functionally, could be a nuclease involved in processing of the 5'-end of pre-16S rRNA. The polypeptide is Putative pre-16S rRNA nuclease (Dechloromonas aromatica (strain RCB)).